A 1096-amino-acid polypeptide reads, in one-letter code: Constitutive coactivator of PPAR-gamma-like protein 2 (1096 aa).

Over residues 35–59 the composition is skewed to low complexity; it reads QQQHLHRQLPPTAALAPGAPRAARG. Disordered regions lie at residues 35–113, 508–579, and 971–1096; these read QQQH…PPQL, NYLP…DGEP, and SRSS…RKED. Residue Arg58 is modified to Omega-N-methylarginine. Residues 82-95 are compositionally biased toward basic residues; it reads TRHHHPAHHFHHHG. Pro residues predominate over residues 101-113; sequence LHPPLPPPPPPQL. Over residues 540–559 the composition is skewed to basic and acidic residues; that stretch reads HITEAFHHQPEWGNPNRDRG. Arg977 carries the post-translational modification Omega-N-methylarginine. 2 stretches are compositionally biased toward basic and acidic residues: residues 1041–1050 and 1076–1096; these read IKEEKSDHRL and NREKNHLQEQKLETVAQRKED. Lys1042 participates in a covalent cross-link: Glycyl lysine isopeptide (Lys-Gly) (interchain with G-Cter in SUMO2).

This sequence belongs to the constitutive coactivator of PPAR-gamma family. Expressed at low levels in a number of tissues.

The protein is Constitutive coactivator of PPAR-gamma-like protein 2 (FAM120C) of Homo sapiens (Human).